The chain runs to 2188 residues: Genome polyprotein (2188 aa).

Gly2 carries N-myristoyl glycine; by host lipidation. Topologically, residues 2-1503 (GAQVTRQQTG…HISRAFITLQ (1502 aa)) are cytoplasmic. Residues Asp408, Arg412, Pro548, Asp549, Ile550, Arg834, Pro838, and Asn839 each coordinate N-acetylneuraminate. Residues His879 and Asp897 each act as for protease 2A activity in the active site. Zn(2+) is bound by residues Cys914 and Cys916. Cys968 (for protease 2A activity) is an active-site residue. The Zn(2+) site is built by Cys974 and His976. The membrane-binding stretch occupies residues 1108-1180 (SESWLKKFTE…EHSCPTTERQ (73 aa)). The tract at residues 1108-1246 (SESWLKKFTE…SPGTGKSVAS (139 aa)) is oligomerization. The interval 1129-1133 (SQKID) is RNA-binding. The SF3 helicase domain occupies 1212 to 1370 (EKKINNYIQF…YKDSNKLDMS (159 aa)). Residue 1236 to 1243 (GSPGTGKS) participates in ATP binding. Zn(2+) is bound by residues Cys1376, Cys1389, and Cys1394. The C4-type; degenerate zinc-finger motif lies at 1376 to 1394 (CKPDNCTPTNYKRCCPLIC). Residues 1421–1428 (EYRTRNST) form an RNA-binding region. Residues 1432–1437 (LEALFQ) form an oligomerization region. The stretch at 1504 to 1519 (AIATFVSIAGVVYVIY) is an intramembrane region. Residues 1520-2188 (KLFAGIQGPY…SLRRKWLDSF (669 aa)) lie on the Cytoplasmic side of the membrane. An O-(5'-phospho-RNA)-tyrosine modification is found at Tyr1529. The region spanning 1549 to 1727 (GPGFDFAQAI…FAAMLLHSYF (179 aa)) is the Peptidase C3 domain. Residues His1588, Glu1619, and Cys1695 each act as for protease 3C activity in the active site. The region spanning 1954-2069 (GEIFAFDYTG…SYPHKIDPGL (116 aa)) is the RdRp catalytic domain. Positions 1960 and 2055 each coordinate Mg(2+).

The protein belongs to the picornaviruses polyprotein family. In terms of assembly, interacts with capsid protein VP1 and capsid protein VP3 to form heterotrimeric protomers. As to quaternary structure, interacts with capsid protein VP0, and capsid protein VP3 to form heterotrimeric protomers. Five protomers subsequently associate to form pentamers which serve as building blocks for the capsid. Interacts with capsid protein VP2, capsid protein VP3 and capsid protein VP4 following cleavage of capsid protein VP0. Interacts with capsid protein VP1 and capsid protein VP3 in the mature capsid. In terms of assembly, interacts with capsid protein VP0 and capsid protein VP1 to form heterotrimeric protomers. Five protomers subsequently associate to form pentamers which serve as building blocks for the capsid. Interacts with capsid protein VP4 in the mature capsid. Interacts with protein 2C; this interaction may be important for virion morphogenesis. Interacts with host IRF7. As to quaternary structure, interacts with capsid protein VP1 and capsid protein VP3. Homodimer. In terms of assembly, homohexamer; forms a hexameric ring structure with 6-fold symmetry characteristic of AAA+ ATPases. Interacts (via N-terminus) with host RTN3 (via reticulon domain); this interaction is important for viral replication. Interacts with capsid protein VP3; this interaction may be important for virion morphogenesis. As to quaternary structure, interacts with protein 3CD. Homodimer. Interacts with host GBF1. Interacts (via GOLD domain) with host ACBD3 (via GOLD domain); this interaction allows the formation of a viral protein 3A/ACBD3 heterotetramer with a 2:2 stoichiometry, which will stimulate the recruitment of host PI4KB in order to synthesize PI4P at the viral RNA replication sites. In terms of assembly, interacts with RNA-directed RNA polymerase. As to quaternary structure, interacts with host IFIH1/MDA5; this interaction inhibits host IFIH1. Interacts with protein 3AB and with RNA-directed RNA polymerase. In terms of assembly, interacts with Viral protein genome-linked and with protein 3CD. The cofactor is Mg(2+). Post-translationally, specific enzymatic cleavages in vivo by the viral proteases yield processing intermediates and the mature proteins. In terms of processing, myristoylation is required for the formation of pentamers during virus assembly. Further assembly of 12 pentamers and a molecule of genomic RNA generates the provirion. During virion maturation, immature virions are rendered infectious following cleavage of VP0 into VP4 and VP2. This maturation seems to be an autocatalytic event triggered by the presence of RNA in the capsid and it is followed by a conformational change infectious virion. Post-translationally, myristoylation is required during RNA encapsidation and formation of the mature virus particle. In terms of processing, VPg is uridylylated by the polymerase into VPg-pUpU. This acts as a nucleotide-peptide primer for the genomic RNA replication.

It localises to the virion. It is found in the host cytoplasm. The protein localises to the host cytoplasmic vesicle membrane. The protein resides in the host nucleus. The enzyme catalyses a ribonucleoside 5'-triphosphate + H2O = a ribonucleoside 5'-diphosphate + phosphate + H(+). The catalysed reaction is Selective cleavage of Tyr-|-Gly bond in the picornavirus polyprotein.. It catalyses the reaction RNA(n) + a ribonucleoside 5'-triphosphate = RNA(n+1) + diphosphate. It carries out the reaction Selective cleavage of Gln-|-Gly bond in the poliovirus polyprotein. In other picornavirus reactions Glu may be substituted for Gln, and Ser or Thr for Gly.. Its function is as follows. Component of immature procapsids, which is cleaved into capsid proteins VP4 and VP2 after maturation. Allows the capsid to remain inactive before the maturation step. In terms of biological role, forms an icosahedral capsid of pseudo T=3 symmetry with capsid proteins VP2 and VP3. The capsid is 300 Angstroms in diameter, composed of 60 copies of each capsid protein and enclosing the viral positive strand RNA genome. Capsid protein VP1 mainly forms the vertices of the capsid. Capsid protein VP1, together with VP3, interacts with host cell sialic acids to provide virion attachment to target host cells. This attachment induces virion internalization. After binding to its receptor, the capsid undergoes conformational changes. Capsid protein VP1 N-terminus (that contains an amphipathic alpha-helix) and capsid protein VP4 are externalized. Together, they shape a pore in the host membrane through which viral genome is translocated to host cell cytoplasm. Functionally, forms an icosahedral capsid of pseudo T=3 symmetry with capsid proteins VP2 and VP3. The capsid is 300 Angstroms in diameter, composed of 60 copies of each capsid protein and enclosing the viral positive strand RNA genome. Forms an icosahedral capsid of pseudo T=3 symmetry with capsid proteins VP2 and VP3. The capsid is 300 Angstroms in diameter, composed of 60 copies of each capsid protein and enclosing the viral positive strand RNA genome. Capsid protein VP3, together with VP1, interacts with host cell sialic acids to provide virion attachment to target host cells. In addition, inhibits the phosphorylation and nuclear translocation of host IRF7 and thereby suppresses downstream interferon production. Its function is as follows. Lies on the inner surface of the capsid shell. After binding to the host receptor, the capsid undergoes conformational changes. Capsid protein VP4 is released, Capsid protein VP1 N-terminus is externalized, and together, they shape a pore in the host membrane through which the viral genome is translocated into the host cell cytoplasm. In terms of biological role, cysteine protease that cleaves viral polyprotein and specific host proteins. It is responsible for the autocatalytic cleavage between the P1 and P2 regions, which is the first cleavage occurring in the polyprotein. Also cleaves the host translation initiation factor EIF4G1, in order to shut down the capped cellular mRNA translation. Inhibits the host nucleus-cytoplasm protein and RNA trafficking by cleaving host members of the nuclear pores. Counteracts stress granule formation probably by antagonizing its assembly or promoting its dissassembly. Also plays a role in the suppression of host innate immunity through cleavage of host TRAF3, a component of the signaling cascade required to produce type I interferons. Functionally, plays an essential role in the virus replication cycle by acting as a viroporin. Creates a pore in the host endoplasmic reticulum and as a consequence releases Ca2+ in the cytoplasm of infected cell. In turn, high levels of cytoplasmic calcium may trigger membrane trafficking and transport of viral ER-associated proteins to viroplasms, sites of viral genome replication. Induces and associates with structural rearrangements of intracellular membranes. Displays RNA-binding, nucleotide binding and NTPase activities. May play a role in virion morphogenesis and viral RNA encapsidation by interacting with the capsid protein VP3. Its function is as follows. Localizes the viral replication complex to the surface of membranous vesicles. Together with protein 3CD binds the Cis-Active RNA Element (CRE) which is involved in RNA synthesis initiation. Acts as a cofactor to stimulate the activity of 3D polymerase, maybe through a nucleid acid chaperone activity. In terms of biological role, localizes the viral replication complex to the surface of membranous vesicles. It inhibits host cell endoplasmic reticulum-to-Golgi apparatus transport and causes the disassembly of the Golgi complex, possibly through GBF1 interaction. This would result in depletion of MHC, trail receptors and IFN receptors at the host cell surface. Plays an essential role in viral RNA replication by recruiting ACBD3 and PI4KB at the viral replication sites, thereby allowing the formation of the rearranged membranous structures where viral replication takes place. Functionally, acts as a primer for viral RNA replication and remains covalently bound to viral genomic RNA. VPg is uridylylated prior to priming replication into VPg-pUpU. The oriI viral genomic sequence may act as a template for this. The VPg-pUpU is then used as primer on the genomic RNA poly(A) by the RNA-dependent RNA polymerase to replicate the viral genome. During genome replication, the VPg-RNA linkage is removed by the host TDP2, thereby accelerating replication. During the late stage of the replication cycle, host TDP2 is excluded from sites of viral RNA synthesis and encapsidation, allowing for the generation of progeny virions. Involved in the viral replication complex and viral polypeptide maturation. It exhibits protease activity with a specificity and catalytic efficiency that is different from protease 3C. Protein 3CD lacks polymerase activity. Protein 3CD binds to the 5'UTR of the viral genome. Its function is as follows. Major viral protease that mediates proteolytic processing of the polyprotein. Cleaves host EIF5B, contributing to host translation shutoff. Also cleaves host PABPC1, contributing to host translation shutoff. Binds and inhibits host IFIH1/MDA5, thereby inhibiting the type-I IFN production and the establishment of the antiviral state. Cleaves host MAP3K7/TAK1, resulting in inhibition of TRAF6-triggered NF-kappa-B induction. Cleaves host TICAM1; this interaction allows the virus to disrupt host TLR3 signaling. Cleaves host IRF7, resulting in inhibition of type-I IFN production. Cleaves host NLRP1, triggers host N-glycine-mediated degradation of the autoinhibitory NLRP1 N-terminal fragment. In terms of biological role, replicates the viral genomic RNA on the surface of intracellular membranes. May form linear arrays of subunits that propagate along a strong head-to-tail interaction called interface-I. Covalently attaches UMP to a tyrosine of VPg, which is used to prime RNA synthesis. The positive stranded RNA genome is first replicated at virus induced membranous vesicles, creating a dsRNA genomic replication form. This dsRNA is then used as template to synthesize positive stranded RNA genomes. ss(+)RNA genomes are either translated, replicated or encapsidated. The sequence is that of Genome polyprotein from Human enterovirus D68 (EV68).